The chain runs to 591 residues: V-type ATP synthase alpha chain (591 aa).

Gly231–Thr238 is a binding site for ATP.

It belongs to the ATPase alpha/beta chains family.

It catalyses the reaction ATP + H2O + 4 H(+)(in) = ADP + phosphate + 5 H(+)(out). In terms of biological role, produces ATP from ADP in the presence of a proton gradient across the membrane. The V-type alpha chain is a catalytic subunit. This is V-type ATP synthase alpha chain from Clostridium novyi (strain NT).